The following is a 73-amino-acid chain: Large ribosomal subunit protein bL31 (73 aa).

It belongs to the bacterial ribosomal protein bL31 family. Type A subfamily. In terms of assembly, part of the 50S ribosomal subunit.

Binds the 23S rRNA. The polypeptide is Large ribosomal subunit protein bL31 (Synechococcus sp. (strain JA-3-3Ab) (Cyanobacteria bacterium Yellowstone A-Prime)).